The primary structure comprises 804 residues: Ribonucleoside-diphosphate reductase large subunit-like protein (804 aa).

This sequence belongs to the ribonucleoside diphosphate reductase large chain family.

It localises to the virion. The protein localises to the host cytoplasm. Its function is as follows. Does not possess a ribonucleotide reductase activity. Betaherpesviruses probably use another strategy to expand the dNTP pool in a quiescent host cell. This Homo sapiens (Human) protein is Ribonucleoside-diphosphate reductase large subunit-like protein.